Reading from the N-terminus, the 196-residue chain is Protein GrpE (196 aa).

Basic and acidic residues predominate over residues 1–26; sequence MQEPHNQEPIEEQKLSEMEDTLEKQH. Residues 1–40 are disordered; sequence MQEPHNQEPIEEQKLSEMEDTLEKQHSGASTENTERAEEG.

Belongs to the GrpE family. Homodimer.

Its subcellular location is the cytoplasm. Its function is as follows. Participates actively in the response to hyperosmotic and heat shock by preventing the aggregation of stress-denatured proteins, in association with DnaK and GrpE. It is the nucleotide exchange factor for DnaK and may function as a thermosensor. Unfolded proteins bind initially to DnaJ; upon interaction with the DnaJ-bound protein, DnaK hydrolyzes its bound ATP, resulting in the formation of a stable complex. GrpE releases ADP from DnaK; ATP binding to DnaK triggers the release of the substrate protein, thus completing the reaction cycle. Several rounds of ATP-dependent interactions between DnaJ, DnaK and GrpE are required for fully efficient folding. This Nitrosomonas eutropha (strain DSM 101675 / C91 / Nm57) protein is Protein GrpE.